The primary structure comprises 291 residues: MASKQLKLVIITGMSGAGKTVAMQSLEDLGYFCVDNLPPSLLPKFWELMKESDKMDKIALVMDLRGREFFDSIEPALDELDNTNFITTKILFLEADDKVLVSRYKETRRHHPLEPNGSVLDGINAERELLSDLKGRSQLVINTSNMAPRELRERINNEFQTEDKDIFNVQLMSFGFKYGIPIDADLVFDVRFLPNPHYIDKMRPLTGLDEDVYEYVMKWPETQTFLDKLVDLLMFTLPFYKREGKTQLVIAIGCTGGQHRSVALTEFVGKAIQQKYETTISHRDMKRRKGR.

Residue 13–20 (GMSGAGKT) coordinates ATP. Position 63 to 66 (63 to 66 (DLRG)) interacts with GTP.

Belongs to the RapZ-like family.

Displays ATPase and GTPase activities. In Listeria monocytogenes serotype 4b (strain CLIP80459), this protein is Nucleotide-binding protein Lm4b_02443.